We begin with the raw amino-acid sequence, 35 residues long: Cytochrome b6-f complex subunit 5 (35 aa).

Residues 5-25 (LLTGIVLGSIFITLLGLLAAA) form a helical membrane-spanning segment.

Belongs to the PetG family. The 4 large subunits of the cytochrome b6-f complex are cytochrome b6, subunit IV (17 kDa polypeptide, PetD), cytochrome f and the Rieske protein, while the 4 small subunits are PetG, PetL, PetM and PetN. The complex functions as a dimer.

Its subcellular location is the plastid. The protein resides in the chloroplast thylakoid membrane. Functionally, component of the cytochrome b6-f complex, which mediates electron transfer between photosystem II (PSII) and photosystem I (PSI), cyclic electron flow around PSI, and state transitions. PetG is required for either the stability or assembly of the cytochrome b6-f complex. In Cyanidium caldarium (Red alga), this protein is Cytochrome b6-f complex subunit 5.